The following is a 744-amino-acid chain: Eukaryotic translation initiation factor 3 subunit B (744 aa).

Residues 1–21 are disordered; that stretch reads MAPSFDHLPDPEEDEYDEEEL. The segment covering 11–21 has biased composition (acidic residues); sequence PEEDEYDEEEL. The 87-residue stretch at 40–126 folds into the RRM domain; that stretch reads TFVVIDGLPE…HTLRVNKLTD (87 aa). WD repeat units follow at residues 193–232, 234–290, 307–348, and 577–622; these read DRQH…RQKR, AHPF…PLRS, PIKR…LLDK, and ADHY…LREE.

The protein belongs to the eIF-3 subunit B family. Component of the eukaryotic translation initiation factor 3 (eIF-3) complex.

It localises to the cytoplasm. RNA-binding component of the eukaryotic translation initiation factor 3 (eIF-3) complex, which is involved in protein synthesis of a specialized repertoire of mRNAs and, together with other initiation factors, stimulates binding of mRNA and methionyl-tRNAi to the 40S ribosome. The eIF-3 complex specifically targets and initiates translation of a subset of mRNAs involved in cell proliferation. This is Eukaryotic translation initiation factor 3 subunit B (prt1) from Botryotinia fuckeliana (strain B05.10) (Noble rot fungus).